Consider the following 276-residue polypeptide: Phospholipid phosphatase 2 (276 aa).

The Cytoplasmic portion of the chain corresponds to 1-4 (MERR). The chain crosses the membrane as a helical span at residues 5–25 (WVFVLLDVLCVLVASLPFIIL). At 26–51 (TLVNAPYKRGFYCGDDSIRYPYRPDT) the chain is on the lumenal side. The chain crosses the membrane as a helical span at residues 52–72 (ITHGLMAGVIITATVVLVSSG). The Cytoplasmic portion of the chain corresponds to 73–87 (EAYLVYTDRLYSRSD). The chain crosses the membrane as a helical span at residues 88–108 (FNNYVAAIYKVLGTFLFGAAV). The Lumenal segment spans residues 109 to 161 (SQSLTDLAKYMIGRLRPSFLAVCDPDWSRVNCSGYVQVEVCRGSPANVTEARL). Positions 117 to 125 (KYMIGRLRP) are phosphatase sequence motif I. 2 N-linked (GlcNAc...) asparagine glycosylation sites follow: asparagine 139 and asparagine 155. The helical transmembrane segment at 162 to 182 (SFYSGHSSFGMYCMLFLALYV) threads the bilayer. The phosphatase sequence motif II stretch occupies residues 164–167 (YSGH). Catalysis depends on histidine 167, which acts as the Proton donors. Residues 183-189 (QARLCWK) are Cytoplasmic-facing. A helical membrane pass occupies residues 190-210 (WARLLRPTVQFFLVAFAIYVG). Topologically, residues 211–225 (YTRVSDNKHHWSDVL) are lumenal. A phosphatase sequence motif III region spans residues 212–223 (TRVSDNKHHWSD). Histidine 219 acts as the Nucleophile in catalysis. Residues 226 to 246 (VGLLQGALVACLTVCYVSDFF) form a helical membrane-spanning segment. Over 247–276 (KSRPPQSCQENEESERKPSLSLTLTLGDRP) the chain is Cytoplasmic. The interval 252–276 (QSCQENEESERKPSLSLTLTLGDRP) is disordered.

Belongs to the PA-phosphatase related phosphoesterase family. Forms functional homodimers and homooligomers. Can also form heterooligomers with PLPP1 and PLPP3. Post-translationally, N-glycosylated. As to expression, expressed in the brain.

The protein resides in the membrane. It localises to the cell membrane. Its subcellular location is the early endosome membrane. It is found in the endoplasmic reticulum membrane. The enzyme catalyses a 1,2-diacyl-sn-glycero-3-phosphate + H2O = a 1,2-diacyl-sn-glycerol + phosphate. It catalyses the reaction 1,2-dihexadecanoyl-sn-glycero-3-phosphate + H2O = 1,2-dihexadecanoyl-sn-glycerol + phosphate. The catalysed reaction is 1,2-di-(9Z-octadecenoyl)-sn-glycero-3-phosphate + H2O = 1,2-di-(9Z-octadecenoyl)-sn-glycerol + phosphate. It carries out the reaction a monoacyl-sn-glycero-3-phosphate + H2O = a monoacylglycerol + phosphate. The enzyme catalyses (9Z)-octadecenoyl-sn-glycero-3-phosphate + H2O = (9Z-octadecenoyl)-glycerol + phosphate. It catalyses the reaction sphing-4-enine 1-phosphate + H2O = sphing-4-enine + phosphate. The catalysed reaction is an N-acylsphing-4-enine 1-phosphate + H2O = an N-acylsphing-4-enine + phosphate. It carries out the reaction N-(octanoyl)-sphing-4-enine-1-phosphate + H2O = N-octanoylsphing-4-enine + phosphate. The enzyme catalyses N-(9Z-octadecenoyl)-ethanolamine phosphate + H2O = N-(9Z-octadecenoyl) ethanolamine + phosphate. It participates in lipid metabolism; phospholipid metabolism. Magnesium-independent phospholipid phosphatase. Insensitive to N-ethylmaleimide. Magnesium-independent phospholipid phosphatase that catalyzes the dephosphorylation of a variety of glycerolipid and sphingolipid phosphate esters including phosphatidate/PA, lysophosphatidate/LPA, sphingosine 1-phosphate/S1P and ceramide 1-phosphate/C1P. Has no apparent extracellular phosphatase activity and therefore most probably acts intracellularly. Also acts on N-oleoyl ethanolamine phosphate/N-(9Z-octadecenoyl)-ethanolamine phosphate, a potential physiological compound. Through dephosphorylation of these bioactive lipid mediators produces new bioactive compounds and may regulate signal transduction in different cellular processes. Indirectly regulates, for instance, cell cycle G1/S phase transition through its phospholipid phosphatase activity. The chain is Phospholipid phosphatase 2 from Rattus norvegicus (Rat).